The primary structure comprises 320 residues: Protoheme IX farnesyltransferase 1 (320 aa).

Transmembrane regions (helical) follow at residues Gly34–Ala54, Leu58–Met78, Ala112–Leu132, Leu135–Val155, Val160–Ala180, Ala189–Ile209, Ile234–Leu254, Gly255–Ile275, and Leu299–Ile319.

The protein belongs to the UbiA prenyltransferase family. Protoheme IX farnesyltransferase subfamily. In terms of assembly, interacts with CtaA.

Its subcellular location is the cell membrane. It catalyses the reaction heme b + (2E,6E)-farnesyl diphosphate + H2O = Fe(II)-heme o + diphosphate. It participates in porphyrin-containing compound metabolism; heme O biosynthesis; heme O from protoheme: step 1/1. Functionally, converts heme B (protoheme IX) to heme O by substitution of the vinyl group on carbon 2 of heme B porphyrin ring with a hydroxyethyl farnesyl side group. The protein is Protoheme IX farnesyltransferase 1 (ctaB1) of Bacillus subtilis (strain 168).